The following is a 549-amino-acid chain: uncharacterized protein (549 aa).

12 helical membrane passes run isoleucine 27 to valine 47, proline 108 to phenylalanine 128, threonine 146 to alanine 166, alanine 197 to leucine 217, phenylalanine 233 to valine 253, valine 265 to leucine 285, phenylalanine 308 to leucine 328, leucine 352 to valine 372, threonine 399 to glycine 419, leucine 434 to glycine 454, isoleucine 472 to isoleucine 492, and isoleucine 501 to glycine 521.

The protein localises to the cell membrane. This is an uncharacterized protein from Mycoplasma pneumoniae (strain ATCC 29342 / M129 / Subtype 1) (Mycoplasmoides pneumoniae).